A 164-amino-acid chain; its full sequence is Phosphopantetheine adenylyltransferase (164 aa).

S9 is a substrate binding site. ATP is bound by residues 9 to 10 (SF) and H17. Substrate-binding residues include K41, V78, and R92. Residues 93–95 (GLR), E103, and 128–134 (SRPITAT) contribute to the ATP site.

Belongs to the bacterial CoaD family. Homohexamer. Requires Mg(2+) as cofactor.

It localises to the cytoplasm. The enzyme catalyses (R)-4'-phosphopantetheine + ATP + H(+) = 3'-dephospho-CoA + diphosphate. Its pathway is cofactor biosynthesis; coenzyme A biosynthesis; CoA from (R)-pantothenate: step 4/5. Functionally, reversibly transfers an adenylyl group from ATP to 4'-phosphopantetheine, yielding dephospho-CoA (dPCoA) and pyrophosphate. This Agrobacterium fabrum (strain C58 / ATCC 33970) (Agrobacterium tumefaciens (strain C58)) protein is Phosphopantetheine adenylyltransferase.